We begin with the raw amino-acid sequence, 176 residues long: Imidazoleglycerol-phosphate dehydratase (176 aa).

The protein belongs to the imidazoleglycerol-phosphate dehydratase family.

It is found in the cytoplasm. It catalyses the reaction D-erythro-1-(imidazol-4-yl)glycerol 3-phosphate = 3-(imidazol-4-yl)-2-oxopropyl phosphate + H2O. Its pathway is amino-acid biosynthesis; L-histidine biosynthesis; L-histidine from 5-phospho-alpha-D-ribose 1-diphosphate: step 6/9. The polypeptide is Imidazoleglycerol-phosphate dehydratase (Pyrococcus furiosus (strain ATCC 43587 / DSM 3638 / JCM 8422 / Vc1)).